Consider the following 161-residue polypeptide: Ubiquitin-conjugating enzyme 15 (161 aa).

The 147-residue stretch at 15–161 (IACNRLQKEL…TRWWFHDDKV (147 aa)) folds into the UBC core domain. Residue Cys-99 is the Glycyl thioester intermediate of the active site.

It belongs to the ubiquitin-conjugating enzyme family.

It catalyses the reaction S-ubiquitinyl-[E1 ubiquitin-activating enzyme]-L-cysteine + [E2 ubiquitin-conjugating enzyme]-L-cysteine = [E1 ubiquitin-activating enzyme]-L-cysteine + S-ubiquitinyl-[E2 ubiquitin-conjugating enzyme]-L-cysteine.. It functions in the pathway protein modification; protein ubiquitination. Accepts the ubiquitin from the E1 complex and catalyzes its covalent attachment to other proteins. The protein is Ubiquitin-conjugating enzyme 15 (UBC15) of Arabidopsis thaliana (Mouse-ear cress).